A 331-amino-acid chain; its full sequence is Anthranilate phosphoribosyltransferase (331 aa).

5-phospho-alpha-D-ribose 1-diphosphate is bound by residues G81, 84–85 (GD), S89, 91–94 (NCST), 109–117 (KHGNRAVSS), and S121. G81 serves as a coordination point for anthranilate. S93 provides a ligand contact to Mg(2+). N112 contributes to the anthranilate binding site. Residue R167 coordinates anthranilate. 2 residues coordinate Mg(2+): D226 and E227.

It belongs to the anthranilate phosphoribosyltransferase family. As to quaternary structure, homodimer. Mg(2+) is required as a cofactor.

It catalyses the reaction N-(5-phospho-beta-D-ribosyl)anthranilate + diphosphate = 5-phospho-alpha-D-ribose 1-diphosphate + anthranilate. It functions in the pathway amino-acid biosynthesis; L-tryptophan biosynthesis; L-tryptophan from chorismate: step 2/5. Catalyzes the transfer of the phosphoribosyl group of 5-phosphorylribose-1-pyrophosphate (PRPP) to anthranilate to yield N-(5'-phosphoribosyl)-anthranilate (PRA). This Oleidesulfovibrio alaskensis (strain ATCC BAA-1058 / DSM 17464 / G20) (Desulfovibrio alaskensis) protein is Anthranilate phosphoribosyltransferase.